We begin with the raw amino-acid sequence, 470 residues long: tRNA(Ile)-lysidine synthase (470 aa).

An ATP-binding site is contributed by 32-37 (SGGVDS).

It belongs to the tRNA(Ile)-lysidine synthase family.

Its subcellular location is the cytoplasm. The catalysed reaction is cytidine(34) in tRNA(Ile2) + L-lysine + ATP = lysidine(34) in tRNA(Ile2) + AMP + diphosphate + H(+). Functionally, ligates lysine onto the cytidine present at position 34 of the AUA codon-specific tRNA(Ile) that contains the anticodon CAU, in an ATP-dependent manner. Cytidine is converted to lysidine, thus changing the amino acid specificity of the tRNA from methionine to isoleucine. This Shewanella woodyi (strain ATCC 51908 / MS32) protein is tRNA(Ile)-lysidine synthase.